The chain runs to 251 residues: Ubiquinone/menaquinone biosynthesis C-methyltransferase UbiE (251 aa).

S-adenosyl-L-methionine-binding positions include threonine 74, aspartate 95, 123 to 124, and serine 140; that span reads NA.

Belongs to the class I-like SAM-binding methyltransferase superfamily. MenG/UbiE family.

The enzyme catalyses a 2-demethylmenaquinol + S-adenosyl-L-methionine = a menaquinol + S-adenosyl-L-homocysteine + H(+). The catalysed reaction is a 2-methoxy-6-(all-trans-polyprenyl)benzene-1,4-diol + S-adenosyl-L-methionine = a 5-methoxy-2-methyl-3-(all-trans-polyprenyl)benzene-1,4-diol + S-adenosyl-L-homocysteine + H(+). The protein operates within quinol/quinone metabolism; menaquinone biosynthesis; menaquinol from 1,4-dihydroxy-2-naphthoate: step 2/2. It participates in cofactor biosynthesis; ubiquinone biosynthesis. Functionally, methyltransferase required for the conversion of demethylmenaquinol (DMKH2) to menaquinol (MKH2) and the conversion of 2-polyprenyl-6-methoxy-1,4-benzoquinol (DDMQH2) to 2-polyprenyl-3-methyl-6-methoxy-1,4-benzoquinol (DMQH2). This Klebsiella pneumoniae (strain 342) protein is Ubiquinone/menaquinone biosynthesis C-methyltransferase UbiE.